Here is a 524-residue protein sequence, read N- to C-terminus: Ankyrin repeat-containing protein At5g02620 (524 aa).

ANK repeat units lie at residues 16-45 (RDDT…GVEL), 55-84 (SGET…SVLA), 90-119 (NGFD…ELSF), 124-153 (SKTT…DLAA), 158-187 (NGKT…GMVT), 192-222 (KGQT…LINS), 226-255 (KGNT…VSRV), and 260-289 (SGET…QNAR). 4 consecutive transmembrane segments (helical) span residues 349–369 (AINS…AAIF), 399–419 (FLIF…VVVV), 441–461 (LMWM…FVVV), and 472–492 (VTAI…YWVI). Ser-508 bears the Phosphoserine mark.

The protein resides in the membrane. The chain is Ankyrin repeat-containing protein At5g02620 from Arabidopsis thaliana (Mouse-ear cress).